The following is a 53-amino-acid chain: Sec-independent protein translocase protein TatA (53 aa).

A helical membrane pass occupies residues 1-21; it reads MGMSVSHLLIVLLIIFVLFGA.

This sequence belongs to the TatA/E family. The Tat system comprises two distinct complexes: a TatABC complex, containing multiple copies of TatA, TatB and TatC subunits, and a separate TatA complex, containing only TatA subunits. Substrates initially bind to the TatABC complex, which probably triggers association of the separate TatA complex to form the active translocon.

Its subcellular location is the cell inner membrane. In terms of biological role, part of the twin-arginine translocation (Tat) system that transports large folded proteins containing a characteristic twin-arginine motif in their signal peptide across membranes. TatA could form the protein-conducting channel of the Tat system. The sequence is that of Sec-independent protein translocase protein TatA from Rickettsia massiliae (strain Mtu5).